Reading from the N-terminus, the 547-residue chain is Aspartate 1-decarboxylase (547 aa).

An N6-(pyridoxal phosphate)lysine modification is found at lysine 338.

It belongs to the group II decarboxylase family. It depends on pyridoxal 5'-phosphate as a cofactor.

It catalyses the reaction L-aspartate + H(+) = beta-alanine + CO2. It functions in the pathway cofactor biosynthesis; (R)-pantothenate biosynthesis; beta-alanine from L-aspartate: step 1/1. Catalyzes the pyridoxal-dependent decarboxylation of aspartate to produce beta-alanine. Has weak activity with glutamate. In Aliivibrio fischeri (strain ATCC 700601 / ES114) (Vibrio fischeri), this protein is Aspartate 1-decarboxylase.